The chain runs to 550 residues: Hydroxylamine reductase (550 aa).

4 residues coordinate [2Fe-2S] cluster: Cys-3, Cys-6, Cys-18, and Cys-25. 8 residues coordinate hybrid [4Fe-2O-2S] cluster: His-249, Glu-273, Cys-317, Cys-405, Cys-433, Cys-458, Glu-492, and Lys-494. Cysteine persulfide is present on Cys-405.

Belongs to the HCP family. Requires [2Fe-2S] cluster as cofactor. It depends on hybrid [4Fe-2O-2S] cluster as a cofactor.

The protein resides in the cytoplasm. The enzyme catalyses A + NH4(+) + H2O = hydroxylamine + AH2 + H(+). Its function is as follows. Catalyzes the reduction of hydroxylamine to form NH(3) and H(2)O. The chain is Hydroxylamine reductase from Proteus mirabilis (strain HI4320).